Reading from the N-terminus, the 96-residue chain is Cathelin (96 aa).

Glutamine 1 is subject to Pyrrolidone carboxylic acid. Residues 31 to 50 (DQPPKADEDPGTPKPVSFTV) are disordered. Cystine bridges form between cysteine 55–cysteine 66 and cysteine 73–cysteine 90.

It belongs to the cathelicidin family.

Its subcellular location is the secreted. Functionally, probably a microbicidal peptide. The sequence is that of Cathelin from Sus scrofa (Pig).